Reading from the N-terminus, the 360-residue chain is Ferredoxin--NADP reductase 1 (360 aa).

The FAD site is built by Asp-43, Gln-51, Tyr-56, Ala-96, Phe-141, Asp-307, and Ser-348.

It belongs to the ferredoxin--NADP reductase type 2 family. As to quaternary structure, homodimer. FAD serves as cofactor.

The enzyme catalyses 2 reduced [2Fe-2S]-[ferredoxin] + NADP(+) + H(+) = 2 oxidized [2Fe-2S]-[ferredoxin] + NADPH. This Cupriavidus taiwanensis (strain DSM 17343 / BCRC 17206 / CCUG 44338 / CIP 107171 / LMG 19424 / R1) (Ralstonia taiwanensis (strain LMG 19424)) protein is Ferredoxin--NADP reductase 1.